Here is a 219-residue protein sequence, read N- to C-terminus: Phosphatidylserine decarboxylase proenzyme (219 aa).

Catalysis depends on Ser-188, which acts as the Schiff-base intermediate with substrate; via pyruvic acid. Ser-188 is subject to Pyruvic acid (Ser); by autocatalysis.

This sequence belongs to the phosphatidylserine decarboxylase family. PSD-A subfamily. As to quaternary structure, heterodimer of a large membrane-associated beta subunit and a small pyruvoyl-containing alpha subunit. It depends on pyruvate as a cofactor. In terms of processing, is synthesized initially as an inactive proenzyme. Formation of the active enzyme involves a self-maturation process in which the active site pyruvoyl group is generated from an internal serine residue via an autocatalytic post-translational modification. Two non-identical subunits are generated from the proenzyme in this reaction, and the pyruvate is formed at the N-terminus of the alpha chain, which is derived from the carboxyl end of the proenzyme. The post-translation cleavage follows an unusual pathway, termed non-hydrolytic serinolysis, in which the side chain hydroxyl group of the serine supplies its oxygen atom to form the C-terminus of the beta chain, while the remainder of the serine residue undergoes an oxidative deamination to produce ammonia and the pyruvoyl prosthetic group on the alpha chain.

It is found in the cell membrane. The enzyme catalyses a 1,2-diacyl-sn-glycero-3-phospho-L-serine + H(+) = a 1,2-diacyl-sn-glycero-3-phosphoethanolamine + CO2. It functions in the pathway phospholipid metabolism; phosphatidylethanolamine biosynthesis; phosphatidylethanolamine from CDP-diacylglycerol: step 2/2. In terms of biological role, catalyzes the formation of phosphatidylethanolamine (PtdEtn) from phosphatidylserine (PtdSer). This chain is Phosphatidylserine decarboxylase proenzyme, found in Citrifermentans bemidjiense (strain ATCC BAA-1014 / DSM 16622 / JCM 12645 / Bem) (Geobacter bemidjiensis).